A 160-amino-acid chain; its full sequence is Zinc finger A20 and AN1 domain-containing stress-associated protein 5 (160 aa).

An A20-type zinc finger spans residues 20–54; it reads TTTTTLCTNNCGVTANPATNNMCQKCFNASLVSAA. Residues Cys26, Cys30, Cys42, Cys45, Cys101, Cys104, Cys115, Cys117, Cys122, His125, His131, and Cys133 each contribute to the Zn(2+) site. An AN1-type zinc finger spans residues 95-141; it reads QQIVNRCSGCRKKVGLTGFRCRCGELFCSEHRYSDRHDCSYDYKTAG.

Its function is as follows. May be involved in environmental stress response. The protein is Zinc finger A20 and AN1 domain-containing stress-associated protein 5 (SAP5) of Arabidopsis thaliana (Mouse-ear cress).